Reading from the N-terminus, the 416-residue chain is Glutamyl-tRNA reductase (416 aa).

Substrate is bound by residues 49 to 52 (TCNR), Ser105, 110 to 112 (EPQ), and Gln116. Cys50 functions as the Nucleophile in the catalytic mechanism. An NADP(+)-binding site is contributed by 185-190 (GAGETI).

This sequence belongs to the glutamyl-tRNA reductase family. As to quaternary structure, homodimer.

It catalyses the reaction (S)-4-amino-5-oxopentanoate + tRNA(Glu) + NADP(+) = L-glutamyl-tRNA(Glu) + NADPH + H(+). Its pathway is porphyrin-containing compound metabolism; protoporphyrin-IX biosynthesis; 5-aminolevulinate from L-glutamyl-tRNA(Glu): step 1/2. Functionally, catalyzes the NADPH-dependent reduction of glutamyl-tRNA(Glu) to glutamate 1-semialdehyde (GSA). This Shewanella sediminis (strain HAW-EB3) protein is Glutamyl-tRNA reductase.